Here is a 206-residue protein sequence, read N- to C-terminus: Dephospho-CoA kinase (206 aa).

The 197-residue stretch at 4–200 (IVALTGGIGS…HRYLKLATAA (197 aa)) folds into the DPCK domain. 12-17 (GSGKST) is a binding site for ATP.

Belongs to the CoaE family.

The protein localises to the cytoplasm. The enzyme catalyses 3'-dephospho-CoA + ATP = ADP + CoA + H(+). It participates in cofactor biosynthesis; coenzyme A biosynthesis; CoA from (R)-pantothenate: step 5/5. Its function is as follows. Catalyzes the phosphorylation of the 3'-hydroxyl group of dephosphocoenzyme A to form coenzyme A. This Yersinia pestis protein is Dephospho-CoA kinase.